Here is a 204-residue protein sequence, read N- to C-terminus: Guanylate kinase (204 aa).

The 180-residue stretch at 5–184 folds into the Guanylate kinase-like domain; sequence GLLLVLSGPS…AVDHIKSIVE (180 aa). 12–19 contacts ATP; it reads GPSGVGKG.

This sequence belongs to the guanylate kinase family.

The protein localises to the cytoplasm. The enzyme catalyses GMP + ATP = GDP + ADP. In terms of biological role, essential for recycling GMP and indirectly, cGMP. In Lactobacillus johnsonii (strain CNCM I-12250 / La1 / NCC 533), this protein is Guanylate kinase.